The primary structure comprises 384 residues: L-type lectin-like domain-containing protein C4F6.05c (384 aa).

Positions 1-19 (MKFCSLFHVLSFCCTLAYA) are cleaved as a signal peptide. An L-type lectin-like domain is found at 20-224 (VPKSQFLQLH…DLVALSNLNI (205 aa)). The Extracellular segment spans residues 20-353 (VPKSQFLQLH…AMGNAYSPYN (334 aa)). Residues 227-251 (PDTSNNENLNPTSNTKQSVGDNTSP) form a disordered region. The helical transmembrane segment at 354–374 (LTNFMVFLLLGAIVSYGIMLV) threads the bilayer. Residues 375–384 (RRDRRRHKYL) lie on the Cytoplasmic side of the membrane.

The protein resides in the membrane. It is found in the endoplasmic reticulum. Its subcellular location is the golgi apparatus. This chain is L-type lectin-like domain-containing protein C4F6.05c, found in Schizosaccharomyces pombe (strain 972 / ATCC 24843) (Fission yeast).